We begin with the raw amino-acid sequence, 295 residues long: Elongation factor Ts (295 aa).

The segment at 79–82 (TDFV) is involved in Mg(2+) ion dislocation from EF-Tu.

This sequence belongs to the EF-Ts family.

The protein resides in the cytoplasm. In terms of biological role, associates with the EF-Tu.GDP complex and induces the exchange of GDP to GTP. It remains bound to the aminoacyl-tRNA.EF-Tu.GTP complex up to the GTP hydrolysis stage on the ribosome. This Mycoplasma capricolum subsp. capricolum (strain California kid / ATCC 27343 / NCTC 10154) protein is Elongation factor Ts.